An 81-amino-acid polypeptide reads, in one-letter code: Large ribosomal subunit protein bL31B (81 aa).

It belongs to the bacterial ribosomal protein bL31 family. Type B subfamily. In terms of assembly, part of the 50S ribosomal subunit.

The protein is Large ribosomal subunit protein bL31B of Bacillus anthracis (strain A0248).